A 553-amino-acid chain; its full sequence is RNA exonuclease 1 (553 aa).

Position 24 is a phosphoserine (S24). Positions 167–194 form a coiled coil; the sequence is MEKINKLKELQKKKKITINDLVLSEQQL. In terms of domain architecture, Exonuclease spans 225-373; that stretch reads IFALDCEMCL…EDARACLELT (149 aa). Residues 509–533 are a coiled coil; the sequence is WNNLSTELEFIQDKKERLDKRRERE.

The protein belongs to the REXO1/REXO3 family.

The protein localises to the nucleus. Functionally, 3' exoribonuclease required for 5S rRNA maturation and for the proper maturation of the 5' cistron of the tRNA-Arg3 dicistronic gene. Involved with REX2 in the maturation of the 5.8S rRNA, and with REX2 and REX3, in the 3' processing of the U5L snRNA. This is RNA exonuclease 1 (RNH70) from Saccharomyces cerevisiae (strain ATCC 204508 / S288c) (Baker's yeast).